Consider the following 241-residue polypeptide: 1-Cys peroxiredoxin (241 aa).

A Thioredoxin domain is found at 33-189 (LRIGDVVPDF…IIRILDSFQL (157 aa)). The active-site Cysteine sulfenic acid (-SOH) intermediate is the C75.

This sequence belongs to the peroxiredoxin family. Prx6 subfamily. As to quaternary structure, homodimer.

It carries out the reaction a hydroperoxide + [thioredoxin]-dithiol = an alcohol + [thioredoxin]-disulfide + H2O. Thiol-specific peroxidase that catalyzes the reduction of hydrogen peroxide and organic hydroperoxides to water and alcohols, respectively. Plays a role in cell protection against oxidative stress by detoxifying peroxides. This is 1-Cys peroxiredoxin from Dictyostelium discoideum (Social amoeba).